The chain runs to 116 residues: Large ribosomal subunit protein bL17 (116 aa).

Belongs to the bacterial ribosomal protein bL17 family. In terms of assembly, part of the 50S ribosomal subunit. Contacts protein L32.

This is Large ribosomal subunit protein bL17 from Prochlorococcus marinus (strain MIT 9312).